The sequence spans 289 residues: Golgi to ER traffic protein 2 (289 aa).

Over residues 1-10 the composition is skewed to basic and acidic residues; the sequence is MSEVSEAEKR. The tract at residues 1–68 is disordered; sequence MSEVSEAEKR…LQRGSNSGQS (68 aa). Residues 1 to 153 lie on the Cytoplasmic side of the membrane; that stretch reads MSEVSEAEKR…VGVHQFQVRQ (153 aa). Over residues 11-21 the composition is skewed to basic residues; the sequence is RILREKRKQKF. Residues 33-68 show a composition bias toward polar residues; the sequence is ITTQQPGGASGDSTVTSAEISDNEGSLQRGSNSGQS. Residues 154 to 173 form a helical membrane-spanning segment; it reads LKAYMLLLRWAILLPFIYYV. The Lumenal segment spans residues 174–196; that stretch reads MHPGTAHWLHTSRFLHFVMEPRN. The chain crosses the membrane as a helical span at residues 197–216; sequence FFMVFTTFEVASISIYYQVL. Topologically, residues 217-263 are cytoplasmic; it reads LTLERTNKVNSLSYSSKLVTWAGLVPDGMLPIDNLQGKVVVALHYWD. A helical transmembrane segment spans residues 264 to 284; that stretch reads ILSMYLTDLSLCLVAAGLMKY. Topologically, residues 285–289 are lumenal; that stretch reads YHAAP.

The protein belongs to the GET2 family. Component of the Golgi to ER traffic (GET) complex, which is composed of GET1, GET2 and GET3. Within the complex, GET1 and GET2 form a heterotetramer which is stabilized by phosphatidylinositol binding and which binds to the GET3 homodimer.

The protein resides in the endoplasmic reticulum membrane. The protein localises to the golgi apparatus membrane. Functionally, required for the post-translational delivery of tail-anchored (TA) proteins to the endoplasmic reticulum. Together with GET1, acts as a membrane receptor for soluble GET3, which recognizes and selectively binds the transmembrane domain of TA proteins in the cytosol. The GET complex cooperates with the HDEL receptor ERD2 to mediate the ATP-dependent retrieval of resident ER proteins that contain a C-terminal H-D-E-L retention signal from the Golgi to the ER. In Eremothecium gossypii (strain ATCC 10895 / CBS 109.51 / FGSC 9923 / NRRL Y-1056) (Yeast), this protein is Golgi to ER traffic protein 2.